The primary structure comprises 617 residues: Proline--tRNA ligase (617 aa).

Belongs to the class-II aminoacyl-tRNA synthetase family. ProS type 1 subfamily. As to quaternary structure, homodimer.

The protein localises to the cytoplasm. It catalyses the reaction tRNA(Pro) + L-proline + ATP = L-prolyl-tRNA(Pro) + AMP + diphosphate. Functionally, catalyzes the attachment of proline to tRNA(Pro) in a two-step reaction: proline is first activated by ATP to form Pro-AMP and then transferred to the acceptor end of tRNA(Pro). As ProRS can inadvertently accommodate and process non-cognate amino acids such as alanine and cysteine, to avoid such errors it has two additional distinct editing activities against alanine. One activity is designated as 'pretransfer' editing and involves the tRNA(Pro)-independent hydrolysis of activated Ala-AMP. The other activity is designated 'posttransfer' editing and involves deacylation of mischarged Ala-tRNA(Pro). The misacylated Cys-tRNA(Pro) is not edited by ProRS. The sequence is that of Proline--tRNA ligase from Streptococcus pneumoniae (strain P1031).